Consider the following 156-residue polypeptide: Small ribosomal subunit protein uS7 (156 aa).

It belongs to the universal ribosomal protein uS7 family. Part of the 30S ribosomal subunit. Contacts proteins S9 and S11.

Functionally, one of the primary rRNA binding proteins, it binds directly to 16S rRNA where it nucleates assembly of the head domain of the 30S subunit. Is located at the subunit interface close to the decoding center, probably blocks exit of the E-site tRNA. The chain is Small ribosomal subunit protein uS7 from Methylorubrum populi (strain ATCC BAA-705 / NCIMB 13946 / BJ001) (Methylobacterium populi).